The following is a 452-amino-acid chain: tRNA modification GTPase MnmE (452 aa).

Residues Arg21, Glu78, and Lys118 each contribute to the (6S)-5-formyl-5,6,7,8-tetrahydrofolate site. The TrmE-type G domain maps to 214-375 (GMKVVIAGRP…LREHLKKSMG (162 aa)). Residue Asn224 participates in K(+) binding. GTP is bound by residues 224–229 (NAGKSS), 243–249 (TNIAGTT), and 268–271 (DTAG). Ser228 contributes to the Mg(2+) binding site. Residues Thr243, Ile245, and Thr248 each contribute to the K(+) site. Thr249 provides a ligand contact to Mg(2+). Lys452 contacts (6S)-5-formyl-5,6,7,8-tetrahydrofolate.

It belongs to the TRAFAC class TrmE-Era-EngA-EngB-Septin-like GTPase superfamily. TrmE GTPase family. As to quaternary structure, homodimer. Heterotetramer of two MnmE and two MnmG subunits. K(+) is required as a cofactor.

Its subcellular location is the cytoplasm. Functionally, exhibits a very high intrinsic GTPase hydrolysis rate. Involved in the addition of a carboxymethylaminomethyl (cmnm) group at the wobble position (U34) of certain tRNAs, forming tRNA-cmnm(5)s(2)U34. The polypeptide is tRNA modification GTPase MnmE (Actinobacillus pleuropneumoniae serotype 5b (strain L20)).